Reading from the N-terminus, the 282-residue chain is MPAETVRKEVALEYCRRVNAGELEGVLQLFAPDALLVDPLGTEPVVGRAALAARLAPALRGAVHEEPGRPYAAHDGTSVVLPATVTVGAPGAPPQRRGRTRVMGVIEVGEDGLIREMRVMWGVTDSSWTARPAPDEERRKELAREHCLRINDGDVDGLLKLYSPRIRFEDPVGSWTRTGLEALRAHATMAVGSNVRETAGLTVAGQDGRHAAVTVSATMDYLPSGPLLARHHLMTLPAPADPHRALIGIEYVMVIGVDADGLIDEMRAYWGATDVSLLDPAA.

A lsd19A region spans residues 1 to 133; it reads MPAETVRKEV…TDSSWTARPA (133 aa). Y14 lines the substrate pocket. D38 functions as the Proton acceptor; for 5-exo epoxide-opening cyclization activity in the catalytic mechanism. Substrate contacts are provided by E65 and H146. The tract at residues 134-282 is lsd19B; that stretch reads PDEERRKELA…TDVSLLDPAA (149 aa). D170 acts as the Proton acceptor; for 6-endo epoxide-opening cyclization activity in catalysis. R177, E197, and Y251 together coordinate substrate.

Epoxide hydrolase responsible for the double epoxide-opening cyclization of bisepoxyprelasalocid A to form lasalocid A, a polyether antibiotic. In vitro, accepts various substrate analogs differing in the left segment of lasalocid and epoxide stereochemistry to afford products with excellent regioselectivity. In Streptomyces lasalocidi (Streptomyces lasaliensis), this protein is Epoxide hydrolase LasB (lsd19).